Consider the following 327-residue polypeptide: Methionyl-tRNA formyltransferase (327 aa).

(6S)-5,6,7,8-tetrahydrofolate is bound at residue 121–124 (SLLP).

This sequence belongs to the Fmt family.

The catalysed reaction is L-methionyl-tRNA(fMet) + (6R)-10-formyltetrahydrofolate = N-formyl-L-methionyl-tRNA(fMet) + (6S)-5,6,7,8-tetrahydrofolate + H(+). Its function is as follows. Attaches a formyl group to the free amino group of methionyl-tRNA(fMet). The formyl group appears to play a dual role in the initiator identity of N-formylmethionyl-tRNA by promoting its recognition by IF2 and preventing the misappropriation of this tRNA by the elongation apparatus. The polypeptide is Methionyl-tRNA formyltransferase (Burkholderia ambifaria (strain MC40-6)).